A 427-amino-acid polypeptide reads, in one-letter code: WD repeat and SOCS box-containing protein 1 (427 aa).

WD repeat units follow at residues 129 to 170 (SRSI…LLLN), 173 to 213 (DHTD…NMVK), 217 to 256 (GHPN…LIRK), 259 to 298 (GHHN…ILLE), and 314 to 353 (ANDR…PQAV). One can recognise an SOCS box domain in the interval 379-427 (SVHFWECPRSIASLQHLCRMALRRVKTTQQVEALPVPMPLRDFLTYRVV).

Component of a probable ECS E3 ubiquitin-protein ligase complex that contains the Elongin BC complex.

It participates in protein modification; protein ubiquitination. In terms of biological role, probable substrate-recognition component of a SCF-like ECS (Elongin-Cullin-SOCS-box protein) E3 ubiquitin-protein ligase complex which mediates the ubiquitination and subsequent proteasomal degradation of target proteins. In Takifugu rubripes (Japanese pufferfish), this protein is WD repeat and SOCS box-containing protein 1 (wsb1).